Here is a 191-residue protein sequence, read N- to C-terminus: 3-isopropylmalate dehydratase small subunit (191 aa).

Belongs to the LeuD family. LeuD type 1 subfamily. Heterodimer of LeuC and LeuD.

The enzyme catalyses (2R,3S)-3-isopropylmalate = (2S)-2-isopropylmalate. It participates in amino-acid biosynthesis; L-leucine biosynthesis; L-leucine from 3-methyl-2-oxobutanoate: step 2/4. Catalyzes the isomerization between 2-isopropylmalate and 3-isopropylmalate, via the formation of 2-isopropylmaleate. This chain is 3-isopropylmalate dehydratase small subunit, found in Staphylococcus haemolyticus (strain JCSC1435).